We begin with the raw amino-acid sequence, 410 residues long: Trans-splicing factor Raa2, chloroplastic (410 aa).

Disordered regions lie at residues 1–40 and 56–106; these read MRTR…QRPA and AADH…QQQV. The transit peptide at 1–46 directs the protein to the chloroplast; the sequence is MRTRAGAFFGKQRSTSPSGSSTSASRQWLRSSPGRTQRPAAHRVLA. Positions 14-25 are enriched in low complexity; sequence STSPSGSSTSAS. Residues 26-35 are compositionally biased toward polar residues; the sequence is RQWLRSSPGR. Residues 96–106 show a composition bias toward low complexity; it reads RQAQRRQQQQV.

The protein belongs to the pseudouridine synthase TruB family. In terms of assembly, possibly associated with other factors required for trans-splicing.

It is found in the plastid. It localises to the chloroplast. Functionally, required for trans-splicing of exons 2 and 3 of the chloroplast encoded psaA mRNA (a group II intron). It is not known if this protein has pseudouridine activity; mutation of the potential active site residue does not cause loss of trans-splicing. This Chlamydomonas reinhardtii (Chlamydomonas smithii) protein is Trans-splicing factor Raa2, chloroplastic (RAA2).